A 311-amino-acid chain; its full sequence is tRNA-cytidine(32) 2-sulfurtransferase (311 aa).

Positions 18–38 are disordered; it reads KVGADHGPSEENGSSHPLFDN. The PP-loop motif motif lies at 77 to 82; it reads SGGKDS. 3 residues coordinate [4Fe-4S] cluster: Cys152, Cys155, and Cys243.

This sequence belongs to the TtcA family. As to quaternary structure, homodimer. Requires Mg(2+) as cofactor. [4Fe-4S] cluster serves as cofactor.

It localises to the cytoplasm. It carries out the reaction cytidine(32) in tRNA + S-sulfanyl-L-cysteinyl-[cysteine desulfurase] + AH2 + ATP = 2-thiocytidine(32) in tRNA + L-cysteinyl-[cysteine desulfurase] + A + AMP + diphosphate + H(+). The protein operates within tRNA modification. Functionally, catalyzes the ATP-dependent 2-thiolation of cytidine in position 32 of tRNA, to form 2-thiocytidine (s(2)C32). The sulfur atoms are provided by the cysteine/cysteine desulfurase (IscS) system. The polypeptide is tRNA-cytidine(32) 2-sulfurtransferase (Agrobacterium fabrum (strain C58 / ATCC 33970) (Agrobacterium tumefaciens (strain C58))).